The following is a 141-amino-acid chain: Nucleoside diphosphate kinase (141 aa).

ATP-binding residues include K11, F59, R87, T93, R104, and N114. The Pros-phosphohistidine intermediate role is filled by H117.

Belongs to the NDK family. Homotetramer. It depends on Mg(2+) as a cofactor.

It is found in the cytoplasm. It catalyses the reaction a 2'-deoxyribonucleoside 5'-diphosphate + ATP = a 2'-deoxyribonucleoside 5'-triphosphate + ADP. The enzyme catalyses a ribonucleoside 5'-diphosphate + ATP = a ribonucleoside 5'-triphosphate + ADP. Major role in the synthesis of nucleoside triphosphates other than ATP. The ATP gamma phosphate is transferred to the NDP beta phosphate via a ping-pong mechanism, using a phosphorylated active-site intermediate. The chain is Nucleoside diphosphate kinase from Bordetella bronchiseptica (strain ATCC BAA-588 / NCTC 13252 / RB50) (Alcaligenes bronchisepticus).